A 93-amino-acid chain; its full sequence is uncharacterized protein (93 aa).

The first 22 residues, 1-22, serve as a signal peptide directing secretion; that stretch reads MNKYWLSGIIFLAYGLASPAFS.

This is an uncharacterized protein from Escherichia coli (strain K12).